The chain runs to 100 residues: Small ribosomal subunit protein uS14c (100 aa).

Belongs to the universal ribosomal protein uS14 family. In terms of assembly, part of the 30S ribosomal subunit.

The protein resides in the plastid. The protein localises to the chloroplast. Its function is as follows. Binds 16S rRNA, required for the assembly of 30S particles. This Zygnema circumcarinatum (Green alga) protein is Small ribosomal subunit protein uS14c.